The sequence spans 425 residues: Enolase (425 aa).

Q164 serves as a coordination point for (2R)-2-phosphoglycerate. The Proton donor role is filled by E208. Positions 243, 286, and 312 each coordinate Mg(2+). 4 residues coordinate (2R)-2-phosphoglycerate: K337, R366, S367, and K388. K337 (proton acceptor) is an active-site residue.

It belongs to the enolase family. Mg(2+) serves as cofactor.

It is found in the cytoplasm. The protein resides in the secreted. It localises to the cell surface. It carries out the reaction (2R)-2-phosphoglycerate = phosphoenolpyruvate + H2O. Its pathway is carbohydrate degradation; glycolysis; pyruvate from D-glyceraldehyde 3-phosphate: step 4/5. Functionally, catalyzes the reversible conversion of 2-phosphoglycerate (2-PG) into phosphoenolpyruvate (PEP). It is essential for the degradation of carbohydrates via glycolysis. The sequence is that of Enolase from Methanococcus aeolicus (strain ATCC BAA-1280 / DSM 17508 / OCM 812 / Nankai-3).